The sequence spans 889 residues: Inter-alpha-trypsin inhibitor heavy chain H3 (889 aa).

The signal sequence occupies residues 1-21 (MRTMWWPCLVLALLSGLETSG). The propeptide occupies 22–33 (FPRSPLQLLGKR). The VIT domain occupies 29–158 (LLGKRSLPEG…KVTFELTYEE (130 aa)). An N-linked (GlcNAc...) asparagine glycan is attached at Asn91. The VWFA domain maps to 284 to 467 (NIVFVIDVSG…LQLQGFYEEV (184 aa)). Asn580 carries an N-linked (GlcNAc...) asparagine glycan. Asp649 bears the Aspartate 1-(chondroitin 4-sulfate)-ester mark. The propeptide occupies 650 to 889 (PHFIIQIPGK…HTDYIVPSLF (240 aa)).

This sequence belongs to the ITIH family. In terms of assembly, I-alpha-I plasma protease inhibitors are assembled from one or two heavy chains (HC) and one light chain, bikunin. Pre-alpha-inhibitor (P-alpha-I) is composed of ITIH3/HC3 and bikunin. In terms of processing, heavy chains are linked to bikunin via chondroitin 4-sulfate esterified to the alpha-carboxyl of the C-terminal aspartate after propeptide cleavage. As to expression, expressed in both liver and brain.

The protein localises to the secreted. Functionally, may act as a carrier of hyaluronan in serum or as a binding protein between hyaluronan and other matrix protein, including those on cell surfaces in tissues to regulate the localization, synthesis and degradation of hyaluronan which are essential to cells undergoing biological processes. The chain is Inter-alpha-trypsin inhibitor heavy chain H3 (Itih3) from Mus musculus (Mouse).